We begin with the raw amino-acid sequence, 206 residues long: MARYLGPKCRLSRREKTDLQLKSGIRAIDSKCNIERIPGMHWQRRGRTTDYGVQLRMKQMIKRYYDVLEKQFANYYKQADRLKGSTGDNLLKLLESRLDNVVYRMGFAATRAEARQLISHKAILVNGEVVNIPSYQVKPGDIIEVRSRAKGQLRIKGALELAQQRAPISWIEVDTKKMTGTFKEQPDVAELPAEFKVNLVVELYSK.

Positions 96-158 constitute an S4 RNA-binding domain; it reads SRLDNVVYRM…AKGQLRIKGA (63 aa).

Belongs to the universal ribosomal protein uS4 family. As to quaternary structure, part of the 30S ribosomal subunit. Contacts protein S5. The interaction surface between S4 and S5 is involved in control of translational fidelity.

In terms of biological role, one of the primary rRNA binding proteins, it binds directly to 16S rRNA where it nucleates assembly of the body of the 30S subunit. With S5 and S12 plays an important role in translational accuracy. This Coxiella burnetii (strain CbuG_Q212) (Coxiella burnetii (strain Q212)) protein is Small ribosomal subunit protein uS4.